Reading from the N-terminus, the 62-residue chain is uncharacterized protein (62 aa).

This is an uncharacterized protein from Dictyostelium discoideum (Social amoeba).